A 1383-amino-acid polypeptide reads, in one-letter code: Periaxin (1383 aa).

A Phosphoserine modification is found at serine 7. Positions leucine 16–threonine 99 constitute a PDZ domain. The Nuclear export signal signature appears at valine 70–leucine 84. Phosphoserine is present on residues serine 133 and serine 243. Tandem repeats lie at residues glycine 432–lysine 436, glycine 440–lysine 444, valine 448–lysine 452, alanine 456–alanine 460, isoleucine 461–glutamine 465, leucine 466–glutamine 470, methionine 474–lysine 478, isoleucine 482–alanine 486, valine 487–histidine 491, leucine 492–lysine 496, leucine 497–proline 501, glutamate 502–proline 506, glutamate 507–proline 511, glutamate 515–proline 519, leucine 523–glutamine 527, valine 531–lysine 535, leucine 536–lysine 540, valine 544–alanine 548, valine 549–histidine 553, leucine 554–glutamine 558, valine 562–lysine 566, leucine 567–lysine 571, valine 575–alanine 579, valine 580–arginine 584, isoleucine 585–glutamine 589, valine 593–lysine 597, isoleucine 601–alanine 605, valine 606–arginine 610, leucine 611–glutamine 615, methionine 619–lysine 623, isoleucine 627–alanine 631, valine 632–arginine 636, leucine 637–glutamine 641, valine 645–lysine 649, valine 653–threonine 657, methionine 658–arginine 662, leucine 663–glutamine 667, valine 671–lysine 675, leucine 676–lysine 680, valine 684–alanine 688, valine 689–proline 693, leucine 694–glutamine 698, leucine 699–proline 703, valine 705–histidine 709, valine 713–lysine 717, and leucine 718–proline 722. Residues glycine 432–proline 722 are 46 X 5 AA approximate tandem repeats of [LVMGIE]-[PSM]-[EDKA]-[LIVMA]-[AQKHPRT]; that may have a tripeptide spacer of [ALKD]-[IPV]-[KPH]. Residues serine 838, serine 971, serine 1020, serine 1271, serine 1275, serine 1277, serine 1285, serine 1323, and serine 1329 each carry the phosphoserine modification. Residues lysine 1251–isoleucine 1383 form a disordered region. Residues serine 1267–serine 1277 are compositionally biased toward low complexity. Positions glycine 1346 to phenylalanine 1355 are enriched in basic and acidic residues. At serine 1361 the chain carries Phosphoserine.

The protein belongs to the periaxin family. Homodimer (via PDZ domain). Interacts with SCN10A. Found in a complex with SCN10A. Interacts with DRP2. Identified in a dystroglycan complex that contains at least PRX, DRP2, UTRN, DMD and DAG1. Detected in a complex composed of at least EZR, AHNAK, PPL and PRX. Identified in a complex with EZR, AHNAK, BFSP1, BFSP2, ANK2, PLEC, VIM and spectrin. Post-translationally, the N-terminus is blocked. Detected in sciatic nerve and in trigeminal nerve Schwann cells. Detected in myelinating Schwann cells in sciatic nerve (at protein level).

It localises to the nucleus. It is found in the cytoplasm. The protein localises to the cell membrane. Its subcellular location is the cell junction. Scaffolding protein that functions as part of a dystroglycan complex in Schwann cells, and as part of EZR and AHNAK-containing complexes in eye lens fiber cells. Required for the maintenance of the peripheral myelin sheath that is essential for normal transmission of nerve impulses and normal perception of sensory stimuli. Required for normal transport of MBP mRNA from the perinuclear to the paranodal regions. Required for normal remyelination after nerve injury. Required for normal elongation of Schwann cells and normal length of the internodes between the nodes of Ranvier. The demyelinated nodes of Ranvier permit saltatory transmission of nerve impulses; shorter internodes cause slower transmission of nerve impulses. Required for the formation of appositions between the abaxonal surface of the myelin sheath and the Schwann cell plasma membrane; the Schwann cell cytoplasm is restricted to regions between these appositions. Required for the formation of Cajal bands and of Schmidt-Lanterman incisures that correspond to short, cytoplasm-filled regions on myelinated nerves. Recruits DRP2 to the Schwann cell plasma membrane. Required for normal protein composition of the eye lens fiber cell plasma membrane and normal eye lens fiber cell morphology. This chain is Periaxin (Prx), found in Rattus norvegicus (Rat).